Reading from the N-terminus, the 470-residue chain is Coproporphyrinogen III oxidase (470 aa).

FAD is bound by residues 12-17 (GGGITG), 41-42 (EA), Lys49, 63-66 (GPDS), Val256, Trp409, and 448-450 (VGI).

Belongs to the protoporphyrinogen/coproporphyrinogen oxidase family. Coproporphyrinogen III oxidase subfamily. Monomer. Requires FAD as cofactor.

The protein localises to the cytoplasm. It is found in the cell membrane. The enzyme catalyses coproporphyrinogen III + 3 O2 = coproporphyrin III + 3 H2O2. It participates in porphyrin-containing compound metabolism; protoheme biosynthesis. Its activity is regulated as follows. Only weakly inhibited by acifluorfen, in contrast to eukaryotic family members. Weakly inhibited by methylacifluorfen. Bilirubin, biliverdin and hemin are all competitive inhibitors. Functionally, involved in coproporphyrin-dependent heme b biosynthesis. Catalyzes the oxidation of coproporphyrinogen III to coproporphyrin III. Can also oxidize protoporphyrinogen IX to protoporphyrin-IX. The specific activity for the oxidation of coproporphyrinogen III is much higher than that for the oxidation of protoporphyrinogen IX. Can also oxidize mesoporphyrinogen IX, but not uroporphyrinogen III. The chain is Coproporphyrinogen III oxidase from Bacillus subtilis (strain 168).